Consider the following 344-residue polypeptide: Trace amine-associated receptor 8a (344 aa).

Over 1–33 the chain is Extracellular; it reads MTSNFSQAPLQLCYENVNASCIKTPYSPGLRVL. N-linked (GlcNAc...) asparagine glycans are attached at residues N4 and N18. 2 disulfides stabilise this stretch: C21/C185 and C96/C189. The helical transmembrane segment at 34-54 threads the bilayer; sequence LYMVFGFGAVLAVCGNLLVVI. Residues 55-67 lie on the Cytoplasmic side of the membrane; that stretch reads SVLHFKQLHSPAN. Residues 68-88 traverse the membrane as a helical segment; that stretch reads FLIASLASADFLVGISVMPFS. At 89–102 the chain is on the extracellular side; it reads MVRSIESCWYFGDT. The helical transmembrane segment at 103 to 127 threads the bilayer; that stretch reads FCSLHSCCDAAFCYSSLFHLCFISV. Over 128 to 146 the chain is Cytoplasmic; it reads DRYIAVTDPLVYPTKFTVS. The chain crosses the membrane as a helical span at residues 147 to 167; the sequence is VSGICISISWILPLVYSSAVF. The Extracellular portion of the chain corresponds to 168–196; the sequence is YTGISATGIENLVSALNCVGGCQIVVNQD. A helical transmembrane segment spans residues 197 to 217; it reads WVLIDFLLFLIPTLVMIILYS. Residues 218–260 are Cytoplasmic-facing; that stretch reads KIFLVAKQQAVKIETSISGSKGESSLESHKARVAKRERKAAKT. The helical transmembrane segment at 261 to 281 threads the bilayer; it reads LGVTVVAFMVSWLPYTIDTLI. At 282 to 291 the chain is on the extracellular side; it reads DAFMGFITPA. The chain crosses the membrane as a helical span at residues 292–314; the sequence is YVYEICCWSAYYNSAMNPLIYAF. Topologically, residues 315–344 are cytoplasmic; that stretch reads FYPWFRKAIKLILSGEILKSHSSTMSLFSE.

The protein belongs to the G-protein coupled receptor 1 family.

It is found in the cell membrane. Olfactory receptor activated by trace amines. Trace amine compounds are enriched in animal body fluids and act on trace amine-associated receptors (TAARs) to elicit both intraspecific and interspecific innate behaviors. Ligand-binding causes a conformation change that triggers signaling via G(s)-class of G alpha proteins (GNAL or GNAS). This Rattus norvegicus (Rat) protein is Trace amine-associated receptor 8a.